A 97-amino-acid polypeptide reads, in one-letter code: Large ribosomal subunit protein eL21 (97 aa).

This sequence belongs to the eukaryotic ribosomal protein eL21 family.

The polypeptide is Large ribosomal subunit protein eL21 (Methanosarcina mazei (strain ATCC BAA-159 / DSM 3647 / Goe1 / Go1 / JCM 11833 / OCM 88) (Methanosarcina frisia)).